The chain runs to 89 residues: Small ribosomal subunit protein uS15 (89 aa).

Over residues 1 to 21 (MVLDPTQKKSVIDAHAKHEGD) the composition is skewed to basic and acidic residues. The segment at 1–24 (MVLDPTQKKSVIDAHAKHEGDTGS) is disordered.

Belongs to the universal ribosomal protein uS15 family. Part of the 30S ribosomal subunit. Forms a bridge to the 50S subunit in the 70S ribosome, contacting the 23S rRNA.

One of the primary rRNA binding proteins, it binds directly to 16S rRNA where it helps nucleate assembly of the platform of the 30S subunit by binding and bridging several RNA helices of the 16S rRNA. Functionally, forms an intersubunit bridge (bridge B4) with the 23S rRNA of the 50S subunit in the ribosome. The sequence is that of Small ribosomal subunit protein uS15 from Desulfovibrio desulfuricans (strain ATCC 27774 / DSM 6949 / MB).